Consider the following 122-residue polypeptide: Large ribosomal subunit protein uL14 (122 aa).

The protein belongs to the universal ribosomal protein uL14 family. As to quaternary structure, part of the 50S ribosomal subunit. Forms a cluster with proteins L3 and L19. In the 70S ribosome, L14 and L19 interact and together make contacts with the 16S rRNA in bridges B5 and B8.

Functionally, binds to 23S rRNA. Forms part of two intersubunit bridges in the 70S ribosome. This chain is Large ribosomal subunit protein uL14, found in Desulfovibrio desulfuricans (strain ATCC 27774 / DSM 6949 / MB).